Consider the following 87-residue polypeptide: Small ribosomal subunit protein uS15 (87 aa).

This sequence belongs to the universal ribosomal protein uS15 family. Part of the 30S ribosomal subunit. Forms a bridge to the 50S subunit in the 70S ribosome, contacting the 23S rRNA.

In terms of biological role, one of the primary rRNA binding proteins, it binds directly to 16S rRNA where it helps nucleate assembly of the platform of the 30S subunit by binding and bridging several RNA helices of the 16S rRNA. Functionally, forms an intersubunit bridge (bridge B4) with the 23S rRNA of the 50S subunit in the ribosome. This Pseudothermotoga lettingae (strain ATCC BAA-301 / DSM 14385 / NBRC 107922 / TMO) (Thermotoga lettingae) protein is Small ribosomal subunit protein uS15.